The sequence spans 602 residues: Oligoendopeptidase F, chromosomal (602 aa).

His388 is a Zn(2+) binding site. Glu389 is a catalytic residue. The Zn(2+) site is built by His392 and His395.

This sequence belongs to the peptidase M3B family. Zn(2+) serves as cofactor.

Functionally, hydrolyzes peptides containing between 7 and 17 amino acids with a rather wide specificity. This is Oligoendopeptidase F, chromosomal (pepF2) from Lactococcus lactis subsp. cremoris (Streptococcus cremoris).